The sequence spans 492 residues: Cytochrome P450 2A1 (492 aa).

At S130 the chain carries Phosphoserine. C437 serves as a coordination point for heme.

The protein belongs to the cytochrome P450 family. Requires heme as cofactor. As to expression, liver and testis.

It localises to the endoplasmic reticulum membrane. The protein resides in the microsome membrane. The enzyme catalyses an organic molecule + reduced [NADPH--hemoprotein reductase] + O2 = an alcohol + oxidized [NADPH--hemoprotein reductase] + H2O + H(+). Its function is as follows. Highly active in the 7-alpha-hydroxylation of testosterone, progesterone and androstenedione. This is Cytochrome P450 2A1 (Cyp2a1) from Rattus norvegicus (Rat).